The following is a 377-amino-acid chain: Phytanoyl-CoA hydroxylase-interacting protein-like (377 aa).

The 110-residue stretch at 52 to 161 (VPQNIKISNI…EINEFCTADY (110 aa)) folds into the Fibronectin type-III domain.

The protein belongs to the PHYHIP family.

In terms of biological role, may play a role in the development of the central system. This Danio rerio (Zebrafish) protein is Phytanoyl-CoA hydroxylase-interacting protein-like (phyhipl).